A 150-amino-acid polypeptide reads, in one-letter code: 2-aminobenzenesulfonate 2,3-dioxygenase subunit beta (150 aa).

It belongs to the bacterial ring-hydroxylating dioxygenase beta subunit family. In terms of assembly, heterotetramer with a alpha2beta2 structure.

The enzyme catalyses 2-aminobenzenesulfonate + NADH + O2 + 2 H(+) = 2,3-dihydroxybenzenesulfonate + NH4(+) + NAD(+). Inhibited by o-phenanthroline. Beta subunit of the oxygenase component of the 2-aminobenzenesulfonate 2,3-dioxygenase system (deaminating) (ABSDOS). Can use 2-aminobenzenesulfonate (ABS), benzenesulfonate (BS), 4-toluenesulfonate (TS), 2-nitrobenzenesulfonate, 3- and 4-aminobenzenesulfonates, 4-chloro- and 4-hydroxybenzenesulfonates and pyridine-3-sulfonate as substrates. No desulfonation of ABS to aminocatechol or aminophenol detected. In Alcaligenes sp, this protein is 2-aminobenzenesulfonate 2,3-dioxygenase subunit beta.